A 202-amino-acid chain; its full sequence is Putative pituitary tumor-transforming gene 3 protein (202 aa).

Residues 61 to 64 (RKAL) carry the D-box motif. The SH3-binding signature appears at 163-173 (PPSPLKMPSPP).

This sequence belongs to the securin family.

It is found in the cytoplasm. It localises to the nucleus. The sequence is that of Putative pituitary tumor-transforming gene 3 protein (PTTG3) from Pan troglodytes (Chimpanzee).